An 88-amino-acid polypeptide reads, in one-letter code: HssA/B-like protein 6 (88 aa).

The disordered stretch occupies residues 1 to 22 (MSILSALTSISNPMKSSNSNVA).

It belongs to the hssA/B family.

In Dictyostelium discoideum (Social amoeba), this protein is HssA/B-like protein 6 (hssl6).